Consider the following 85-residue polypeptide: Small ribosomal subunit protein uS15 (85 aa).

Belongs to the universal ribosomal protein uS15 family. In terms of assembly, part of the 30S ribosomal subunit. Forms a bridge to the 50S subunit in the 70S ribosome, contacting the 23S rRNA.

In terms of biological role, one of the primary rRNA binding proteins, it binds directly to 16S rRNA where it helps nucleate assembly of the platform of the 30S subunit by binding and bridging several RNA helices of the 16S rRNA. Forms an intersubunit bridge (bridge B4) with the 23S rRNA of the 50S subunit in the ribosome. The protein is Small ribosomal subunit protein uS15 of Fusobacterium nucleatum subsp. nucleatum (strain ATCC 25586 / DSM 15643 / BCRC 10681 / CIP 101130 / JCM 8532 / KCTC 2640 / LMG 13131 / VPI 4355).